The chain runs to 39 residues: Contryphan-Cal3 (39 aa).

The signal sequence occupies residues 1–20 (MTRTAVLLLTLLFLVAMAAS). A disulfide bond links C29 and C35.

In terms of tissue distribution, expressed by the venom duct.

The protein localises to the secreted. In terms of biological role, probable neurotoxin. In Californiconus californicus (California cone), this protein is Contryphan-Cal3.